The primary structure comprises 158 residues: Transcription factor BTF3 homolog 4 (158 aa).

The residue at position 5 (lysine 5) is an N6-methyllysine. In terms of domain architecture, NAC-A/B spans 33–98 (TADDKKLQSS…AEAKPITEML (66 aa)). Position 111 is a phosphothreonine (threonine 111). The segment at 123–158 (QVLDSKTPKPEDIDEEEDDVPDLVENFDEASKNEAN) is disordered. Acidic residues predominate over residues 134–150 (DIDEEEDDVPDLVENFD).

This sequence belongs to the NAC-beta family.

The polypeptide is Transcription factor BTF3 homolog 4 (BTF3L4) (Bos taurus (Bovine)).